A 315-amino-acid polypeptide reads, in one-letter code: Replication factor C small subunit (315 aa).

43-50 (GSPGVGKT) lines the ATP pocket.

This sequence belongs to the activator 1 small subunits family. RfcS subfamily. In terms of assembly, heteromultimer composed of small subunits (RfcS) and large subunits (RfcL).

In terms of biological role, part of the RFC clamp loader complex which loads the PCNA sliding clamp onto DNA. The protein is Replication factor C small subunit of Methanococcus maripaludis (strain C7 / ATCC BAA-1331).